Here is a 255-residue protein sequence, read N- to C-terminus: Hydroxyacylglutathione hydrolase (255 aa).

Residues H56, H58, D60, H61, H114, D133, and H171 each coordinate Zn(2+).

The protein belongs to the metallo-beta-lactamase superfamily. Glyoxalase II family. In terms of assembly, monomer. Zn(2+) is required as a cofactor.

It catalyses the reaction an S-(2-hydroxyacyl)glutathione + H2O = a 2-hydroxy carboxylate + glutathione + H(+). It participates in secondary metabolite metabolism; methylglyoxal degradation; (R)-lactate from methylglyoxal: step 2/2. Thiolesterase that catalyzes the hydrolysis of S-D-lactoyl-glutathione to form glutathione and D-lactic acid. The chain is Hydroxyacylglutathione hydrolase from Nitrobacter winogradskyi (strain ATCC 25391 / DSM 10237 / CIP 104748 / NCIMB 11846 / Nb-255).